Reading from the N-terminus, the 569-residue chain is Vacuolar protein sorting-associated protein 53 B (569 aa).

3 coiled-coil regions span residues 53 to 90 (TRAK…VQDI), 125 to 145 (QVMT…AINE), and 295 to 316 (KEKS…FERE).

Belongs to the VPS53 family. As to quaternary structure, component of the Golgi-associated retrograde protein (GARP) complex.

It localises to the cytoplasm. The protein resides in the golgi apparatus. Its subcellular location is the trans-Golgi network membrane. The protein localises to the endosome membrane. Functionally, involved in retrograde transport from early and late endosomes to late Golgi, leading to the membrane fusion between late Golgi and endosomal vesicles. The polypeptide is Vacuolar protein sorting-associated protein 53 B (Arabidopsis thaliana (Mouse-ear cress)).